A 403-amino-acid polypeptide reads, in one-letter code: FAD-dependent monooxygenase tazP (403 aa).

Positions 75, 144, 354, and 367 each coordinate FAD.

Belongs to the paxM FAD-dependent monooxygenase family. The cofactor is FAD.

It functions in the pathway secondary metabolite biosynthesis. Functionally, FAD-dependent monooxygenase; part of the gene cluster that mediates the biosynthesis of azaterrilone A and other azaphilones, a class of fungal metabolites characterized by a highly oxygenated pyrano-quinone bicyclic core and exhibiting a broad range of bioactivities. The first step of the pathway begins with the non-reducing polyketide synthase tazA that assembles one acetyl-CoA starter unit, five malonyl-CoA units, and catalyzes a series of Claisen condensations, methylation, PT-mediated cyclization, and finally releases the first hexaketide precursor through the R-domain. The tazA product then undergoes reduction on its terminal ketone and the following pyran-ring formation by yet undetermined enzyme(s). Dehydration and enoyl reduction, possibly involving the trans-enoyl reductase tazE leads to the next intermediate. TazD is predicted as an acetyltransferase and might catalyze the acetylation steps leading to the synthesis of azaterrilone A. Azaterrilone A is not the final product of the taz pathway and both the highly reducing polyketide synthase tazB and the dual enzyme tazHJ catalyze late steps of the pathway, leading to the production of the 2 final stereoisomers that contain additional polyketide modification whose structures have still to be determined. The chain is FAD-dependent monooxygenase tazP from Aspergillus terreus (strain NIH 2624 / FGSC A1156).